Consider the following 501-residue polypeptide: 2-phosphoxylose phosphatase 1 (501 aa).

Over 1-6 the chain is Cytoplasmic; that stretch reads MLLRNR. The helical; Signal-anchor for type II membrane protein transmembrane segment at 7-27 threads the bilayer; the sequence is FLLLLALAGLLAFLSLSLQFF. The Lumenal portion of the chain corresponds to 28–501; that stretch reads SRWLPVSLQL…YYDACHQRLF (474 aa). H120 serves as the catalytic Nucleophile. N-linked (GlcNAc...) asparagine glycosylation is found at N328 and N377. The active-site Proton donor is D402. N488 carries an N-linked (GlcNAc...) asparagine glycan.

Belongs to the histidine acid phosphatase family.

The protein localises to the golgi apparatus membrane. The enzyme catalyses 3-O-[beta-D-GlcA-(1-&gt;3)-beta-D-Gal-(1-&gt;3)-beta-D-Gal-(1-&gt;4)-beta-D-2-O-P-Xyl]-L-seryl-[protein] + H2O = 3-O-(beta-D-GlcA-(1-&gt;3)-beta-D-Gal-(1-&gt;3)-beta-D-Gal-(1-&gt;4)-beta-D-Xyl)-L-seryl-[protein] + phosphate. Responsible for the 2-O-dephosphorylation of xylose in the glycosaminoglycan-protein linkage region of proteoglycans thereby regulating the amount of mature glycosaminoglycan (GAG) chains. Sulfated glycosaminoglycans (GAGs), including heparan sulfate and chondroitin sulfate, are synthesized on the so-called common GAG-protein linkage region (GlcUAbeta1-3Galbeta1-3Galbeta1-4Xylbeta1-O-Ser) of core proteins, which is formed by the stepwise addition of monosaccharide residues by the respective specific glycosyltransferases. Xylose 2-O-dephosphorylation during completion of linkage region formation is a prerequisite for the initiation and efficient elongation of the repeating disaccharide region of GAG chains. This chain is 2-phosphoxylose phosphatase 1, found in Xenopus tropicalis (Western clawed frog).